We begin with the raw amino-acid sequence, 160 residues long: Cyclic pyranopterin monophosphate synthase (160 aa).

Residues 77–79 (MCH) and 114–115 (ME) contribute to the substrate site. Aspartate 129 is a catalytic residue.

The protein belongs to the MoaC family. Homohexamer; trimer of dimers.

It catalyses the reaction (8S)-3',8-cyclo-7,8-dihydroguanosine 5'-triphosphate = cyclic pyranopterin phosphate + diphosphate. The protein operates within cofactor biosynthesis; molybdopterin biosynthesis. Its function is as follows. Catalyzes the conversion of (8S)-3',8-cyclo-7,8-dihydroguanosine 5'-triphosphate to cyclic pyranopterin monophosphate (cPMP). The sequence is that of Cyclic pyranopterin monophosphate synthase from Listeria monocytogenes serovar 1/2a (strain ATCC BAA-679 / EGD-e).